The sequence spans 450 residues: MAGNYFGTDGIRGRANKFPMTAEIAMRVGMAAGLSFQRGSHRHRVVLGKDTRLSGYMIENAMVAGLCAAGMDVFLLGPIPTPAVAMLVRSLRADIGVMISASHNPYYDNGIKLFGPDGYKLSDEIEERIESMLDKDVELTLADSDGLGRAKRVDGVHDRYIEFAKRTLPRSMSLSGLRIVVDCANGAAYKVAPEALWELGAEVVAINIEPNGFNINKECGSTHPAGLQKKVHEVRADIGIALDGDADRVVIVDENGAIVDGDQIMAMIAESWHQSGRLAGGGVVSTVMSNLGLERFLGDMKLQLHRTKVGDRYVVEHMRAHGLNVGGEQSGHIVLSDFSTTGDGLVSALQVLACIKRQGRPVSELSKKFEPVPQLLKNVRIAGGKPLEEAPVKAAIEDARNRLGKAGRLVIRPSGTEPLIRVMAEGDDPQLVEAVVNDIVEVISETRSAA.

S102 serves as the catalytic Phosphoserine intermediate. Residues S102, D243, D245, and D247 each coordinate Mg(2+). S102 is modified (phosphoserine).

The protein belongs to the phosphohexose mutase family. The cofactor is Mg(2+). In terms of processing, activated by phosphorylation.

It carries out the reaction alpha-D-glucosamine 1-phosphate = D-glucosamine 6-phosphate. Catalyzes the conversion of glucosamine-6-phosphate to glucosamine-1-phosphate. This Mesorhizobium japonicum (strain LMG 29417 / CECT 9101 / MAFF 303099) (Mesorhizobium loti (strain MAFF 303099)) protein is Phosphoglucosamine mutase.